Reading from the N-terminus, the 363-residue chain is Chorismate synthase (363 aa).

The NADP(+) site is built by Arg-48 and Arg-54. Residues 125 to 127 (RSS), 238 to 239 (NA), Gly-278, 293 to 297 (KPTSS), and Arg-319 each bind FMN.

It belongs to the chorismate synthase family. In terms of assembly, homotetramer. It depends on FMNH2 as a cofactor.

The catalysed reaction is 5-O-(1-carboxyvinyl)-3-phosphoshikimate = chorismate + phosphate. The protein operates within metabolic intermediate biosynthesis; chorismate biosynthesis; chorismate from D-erythrose 4-phosphate and phosphoenolpyruvate: step 7/7. Its function is as follows. Catalyzes the anti-1,4-elimination of the C-3 phosphate and the C-6 proR hydrogen from 5-enolpyruvylshikimate-3-phosphate (EPSP) to yield chorismate, which is the branch point compound that serves as the starting substrate for the three terminal pathways of aromatic amino acid biosynthesis. This reaction introduces a second double bond into the aromatic ring system. This chain is Chorismate synthase, found in Alcanivorax borkumensis (strain ATCC 700651 / DSM 11573 / NCIMB 13689 / SK2).